A 134-amino-acid polypeptide reads, in one-letter code: Auxin-responsive protein SAUR40 (134 aa).

The protein belongs to the ARG7 family. In terms of assembly, interacts with and inhibits PP2C-D subfamily of type 2C phosphatases such as PP2C67/PP2C-D1.

Its subcellular location is the cytoplasm. In terms of biological role, provide a mechanistic link between auxin and plasma membrane H(+)-ATPases (PM H(+)-ATPases, e.g. AHA1 and AHA2), and triggers PM H(+)-ATPases activity by promoting phosphorylation of their C-terminal autoinhibitory domain as a result of PP2C-D subfamily of type 2C phosphatases inhibition, thus leading to the acidification of the apoplast and the facilitation of solutes and water uptake to drive cell expansion. Plays a role in the regulation of cell expansion, root meristem patterning and auxin transport. The protein is Auxin-responsive protein SAUR40 of Arabidopsis thaliana (Mouse-ear cress).